The chain runs to 173 residues: RNA pyrophosphohydrolase (173 aa).

The 154-residue stretch at 11-164 (PYRRCVGVVV…KKHVYRKVVS (154 aa)) folds into the Nudix hydrolase domain. Residues 52–73 (GGIDEGEEPLDAACRELYEETG) carry the Nudix box motif.

Belongs to the Nudix hydrolase family. RppH subfamily. It depends on a divalent metal cation as a cofactor.

Its function is as follows. Accelerates the degradation of transcripts by removing pyrophosphate from the 5'-end of triphosphorylated RNA, leading to a more labile monophosphorylated state that can stimulate subsequent ribonuclease cleavage. This chain is RNA pyrophosphohydrolase, found in Bartonella quintana (strain Toulouse) (Rochalimaea quintana).